Here is a 101-residue protein sequence, read N- to C-terminus: Small ribosomal subunit protein uS14 (101 aa).

It belongs to the universal ribosomal protein uS14 family. Part of the 30S ribosomal subunit. Contacts proteins S3 and S10.

Its function is as follows. Binds 16S rRNA, required for the assembly of 30S particles and may also be responsible for determining the conformation of the 16S rRNA at the A site. The chain is Small ribosomal subunit protein uS14 from Cupriavidus pinatubonensis (strain JMP 134 / LMG 1197) (Cupriavidus necator (strain JMP 134)).